Here is a 472-residue protein sequence, read N- to C-terminus: Eukaryotic translation initiation factor 2 subunit 3, X-linked (472 aa).

N-acetylalanine is present on Ala-2. The residue at position 16 (Ser-16) is a Phosphoserine. The 210-residue stretch at Gln-39–Arg-248 folds into the tr-type G domain. Residues Gly-48–Ser-55 are G1. Ala-51 to Thr-56 provides a ligand contact to GTP. The G2 stretch occupies residues Asn-76–Lys-80. Positions Asp-134 to Gly-137 are G3. Residues Asn-190–Asp-193 and Ser-225–Gln-227 each bind GTP. Residues Asn-190–Asp-193 are G4. Residues Ser-225–Gln-227 form a G5 region. The segment at Gly-457–Val-469 is interacts with Cdc123.

Belongs to the TRAFAC class translation factor GTPase superfamily. Classic translation factor GTPase family. EIF2G subfamily. Eukaryotic translation initiation factor 2 eIF2 is a heterotrimeric complex composed of an alpha (EIF2S1), a beta (EIF2S2) and a gamma (EIF2S3) chain. eIF2 is member of the 43S pre-initiation complex (43S PIC). Interacts (via C-terminus) with CDC123; the interaction is direct. In terms of tissue distribution, widely expressed.

It is found in the cytoplasm. Its subcellular location is the cytosol. It catalyses the reaction GTP + H2O = GDP + phosphate + H(+). Its function is as follows. Member of the eIF2 complex that functions in the early steps of protein synthesis by forming a ternary complex with GTP and initiator tRNA. This complex binds to a 40S ribosomal subunit, followed by mRNA binding to form the 43S pre-initiation complex (43S PIC). Junction of the 60S ribosomal subunit to form the 80S initiation complex is preceded by hydrolysis of the GTP bound to eIF2 and release of an eIF2-GDP binary complex. In order for eIF2 to recycle and catalyze another round of initiation, the GDP bound to eIF2 must exchange with GTP by way of a reaction catalyzed by eIF-2B. Along with its paralog on chromosome Y, may contribute to spermatogenesis up to the round spermatid stage. The protein is Eukaryotic translation initiation factor 2 subunit 3, X-linked (Eif2s3) of Rattus norvegicus (Rat).